A 368-amino-acid chain; its full sequence is Membrane glycoprotein UL18 (368 aa).

Positions 1–19 (MMTMWCLTLFVLWMLRVVG) are cleaved as a signal peptide. A helical membrane pass occupies residues 326–346 (ISSVLLALLLCALLFAFLHYF).

In terms of assembly, interacts with host LILRB1.

The protein resides in the host membrane. Functionally, plays a role in the protection against host NK cell cytotoxicity by interacting with and modulating the activity of the host inhibitory leukocyte Ig-like receptor 1/LILRB1, which is expressed on monocytes, dendritic cells, as well as subsets of T and NK cells. UL18 exerts an inhibitory effect on LIR-1+ NK cells, while it stimulates LIR-1- NK cell. This is Membrane glycoprotein UL18 (UL18) from Homo sapiens (Human).